Reading from the N-terminus, the 322-residue chain is Solute carrier family 35 member B1 (322 aa).

8 helical membrane-spanning segments follow: residues 12 to 32 (LRLP…GILQ), 51 to 71 (FALT…KILI), 85 to 105 (WLYA…NSAL), 136 to 156 (YPLA…LFMY), 168 to 188 (TVGF…LTGV), 210 to 230 (LWST…WEFL), 243 to 263 (ILLF…TVVY), and 285 to 305 (VILF…LVFL). The Di-lysine motif motif lies at 318-322 (KKTSH).

The protein belongs to the nucleotide-sugar transporter family. SLC35B subfamily.

The protein localises to the endoplasmic reticulum membrane. The catalysed reaction is ADP(in) + ATP(out) = ADP(out) + ATP(in). It catalyses the reaction UDP(out) + ATP(in) = UDP(in) + ATP(out). The enzyme catalyses UTP(out) + ATP(in) = UTP(in) + ATP(out). It carries out the reaction dATP(out) + ATP(in) = dATP(in) + ATP(out). Its function is as follows. ATP:ADP antiporter that catalyzes the exchange of ATP and ADP across the endoplasmic reticulum (ER) membrane. Imports ATP from the cytosol to the ER lumen and exports ADP in the opposite direction. Regulates ER energy metabolism and protein biogenesis. Appears to be part of a calcium-dependent ER to cytosol low energy response axis, where calcium efflux from ER to the cytosol triggers ATP import into the ER lumen to maintain sufficient ATP supply. Provides ATP to ER chaperone HSPA5 that drives protein folding and trafficking in the ER. Can transport dATP, UTP or UDP in exchange for ATP, but the physiological relevance of this process remains to be established. This Rattus norvegicus (Rat) protein is Solute carrier family 35 member B1 (Slc35b1).